The chain runs to 137 residues: Large ribosomal subunit protein uL16 (137 aa).

This sequence belongs to the universal ribosomal protein uL16 family. As to quaternary structure, part of the 50S ribosomal subunit.

In terms of biological role, binds 23S rRNA and is also seen to make contacts with the A and possibly P site tRNAs. The polypeptide is Large ribosomal subunit protein uL16 (Leuconostoc citreum (strain KM20)).